A 908-amino-acid chain; its full sequence is 26S proteasome non-ATPase regulatory subunit 2 (908 aa).

An N-acetylmethionine modification is found at Met1. The segment at 1–52 is disordered; it reads MEEGGRDKAPLQPQQPPATSPGSGDEKPSGKERRDAGDKDKEQELSEEDKQL. Over residues 24–52 the composition is skewed to basic and acidic residues; it reads GDEKPSGKERRDAGDKDKEQELSEEDKQL. Ser29 and Ser147 each carry phosphoserine. Phosphotyrosine is present on Tyr194. Phosphoserine is present on residues Ser361 and Ser363. 5 PC repeats span residues 409–442, 443–479, 480–514, 517–551, and 560–589; these read SAAASLGMILLWDVDGGLTQIDKYLYSSEDYIKS, GALLACGIVNSGVRNECDPALALLSDYVLHNSNTMRL, GSIFGLGLAYAGSNREDVLTLLLPVMGDSKSSMEV, VTALACGMIAVGSCNGDVTSTILQTIMEKSETELK, and LGLGLNHLGKGEAIEAILAALEVVSEPFRS. Residue Lys551 is modified to N6-acetyllysine. Residues 623–643 show a composition bias toward basic and acidic residues; the sequence is KEKEEDKDKKEKKDKDKKEAP. A disordered region spans residues 623–645; that stretch reads KEKEEDKDKKEKKDKDKKEAPAD. 2 PC repeats span residues 692–723 and 742–757; these read LALALISVSNPRLNILDTLSKFSHDADPEVSY and AAMLRQLAQYHAKDPN. The interval 708 to 903 is required for interaction with UBLCP1; sequence DTLSKFSHDA…LEGFVILRKN (196 aa).

The protein belongs to the proteasome subunit S2 family. As to quaternary structure, component of the 19S proteasome regulatory particle complex. The 26S proteasome consists of a 20S core particle (CP) and two 19S regulatory subunits (RP). The regulatory particle is made of a lid composed of 9 subunits, a base containing 6 ATPases and few additional components including PSMD2. Interacts with RPGRIP1L. Interacts with CRY1 in a KDM8-dependent manner. Interacts (via C-terminus) with phosphatase UBLCP1 (via ubiquitin-like domain); the interaction recruits UBLCP1 to the 19S regulatory particle where it dephosphorylates 19S subunit PSMC2/RPT1 which impairs PSMC2 ATPase activity and disrupts 26S proteasome assembly.

Component of the 26S proteasome, a multiprotein complex involved in the ATP-dependent degradation of ubiquitinated proteins. This complex plays a key role in the maintenance of protein homeostasis by removing misfolded or damaged proteins, which could impair cellular functions, and by removing proteins whose functions are no longer required. Therefore, the proteasome participates in numerous cellular processes, including cell cycle progression, apoptosis, or DNA damage repair. In terms of biological role, binds to the intracellular domain of tumor necrosis factor type 1 receptor. The binding domain of TRAP1 and TRAP2 resides outside the death domain of TNFR1. The chain is 26S proteasome non-ATPase regulatory subunit 2 (PSMD2) from Bos taurus (Bovine).